The sequence spans 238 residues: Transmembrane protein 127 (238 aa).

M1 carries the post-translational modification N-acetylmethionine. Positions 1-11 are enriched in gly residues; it reads MYAPGGAGLPG. The tract at residues 1-27 is disordered; it reads MYAPGGAGLPGGRRRRSPGGSALPKQP. S17 carries the phosphoserine modification. Helical transmembrane passes span 96–116, 130–150, and 169–189; these read IAAF…LDVF, AFAH…SYWA, and VYVT…ASIL.

It belongs to the TMEM127 family. In terms of tissue distribution, widely expressed.

It localises to the cell membrane. The protein localises to the cytoplasm. In terms of biological role, controls cell proliferation acting as a negative regulator of TOR signaling pathway mediated by mTORC1. May act as a tumor suppressor. This chain is Transmembrane protein 127 (TMEM127), found in Homo sapiens (Human).